We begin with the raw amino-acid sequence, 120 residues long: Ribonuclease P protein component 2 (120 aa).

It belongs to the eukaryotic/archaeal RNase P protein component 2 family. In terms of assembly, consists of a catalytic RNA component and at least 4-5 protein subunits. Forms a subcomplex with Rnp3 which stimulates the catalytic RNA.

The protein resides in the cytoplasm. The enzyme catalyses Endonucleolytic cleavage of RNA, removing 5'-extranucleotides from tRNA precursor.. Functionally, part of ribonuclease P, a protein complex that generates mature tRNA molecules by cleaving their 5'-ends. The RNA is catalytic, but its KM for pre-tRNA is 170-fold decreased in the presence of the 4 known protein subunits (Rnp1-4). The protein subunits also decrease the amount of Mg(2+) needed for activity. This Pyrococcus furiosus (strain ATCC 43587 / DSM 3638 / JCM 8422 / Vc1) protein is Ribonuclease P protein component 2.